The sequence spans 382 residues: Galactokinase (382 aa).

34 to 37 is a binding site for substrate; sequence EHTD. 124-130 contributes to the ATP binding site; sequence GAGLSSS. Mg(2+) is bound by residues Ser130 and Glu162. The Proton acceptor role is filled by Asp174. Residue Tyr223 participates in substrate binding.

The protein belongs to the GHMP kinase family. GalK subfamily.

It localises to the cytoplasm. It carries out the reaction alpha-D-galactose + ATP = alpha-D-galactose 1-phosphate + ADP + H(+). It functions in the pathway carbohydrate metabolism; galactose metabolism. In terms of biological role, catalyzes the transfer of the gamma-phosphate of ATP to D-galactose to form alpha-D-galactose-1-phosphate (Gal-1-P). This chain is Galactokinase, found in Aeromonas hydrophila subsp. hydrophila (strain ATCC 7966 / DSM 30187 / BCRC 13018 / CCUG 14551 / JCM 1027 / KCTC 2358 / NCIMB 9240 / NCTC 8049).